The following is a 325-amino-acid chain: Aldo-keto reductase family 1 member A1 (325 aa).

Alanine 2 is modified (N-acetylalanine). Phosphoserine is present on serine 4. Residues 11–20 (GQKMPLIGLG), threonine 21, and tryptophan 22 contribute to the NADP(+) site. Serine 38 is modified (phosphoserine). Aspartate 45 provides a ligand contact to NADP(+). Residue tyrosine 50 is the Proton donor of the active site. The residue at position 127 (lysine 127) is an N6-acetyllysine; alternate. Residue lysine 127 is modified to N6-succinyllysine; alternate. An N6-succinyllysine modification is found at lysine 145. 13 residues coordinate NADP(+): serine 162, asparagine 163, serine 211, leucine 213, serine 215, serine 216, lysine 263, serine 264, isoleucine 265, threonine 266, arginine 269, glutamine 272, and asparagine 273. The residue at position 211 (serine 211) is a Phosphoserine.

This sequence belongs to the aldo/keto reductase family. Monomer. As to expression, widely expressed. Highly expressed in kidney, salivary gland and liver. Detected in trachea, stomach, brain, lung, prostate, placenta, mammary gland, small intestine and lung.

Its subcellular location is the cytoplasm. The protein resides in the cytosol. The protein localises to the apical cell membrane. It carries out the reaction a primary alcohol + NADP(+) = an aldehyde + NADPH + H(+). The enzyme catalyses allyl alcohol + NADP(+) = acrolein + NADPH + H(+). It catalyses the reaction glycerol + NADP(+) = D-glyceraldehyde + NADPH + H(+). The catalysed reaction is glycerol + NADP(+) = L-glyceraldehyde + NADPH + H(+). It carries out the reaction hydroxyacetone + NADP(+) = methylglyoxal + NADPH + H(+). The enzyme catalyses a 4-hydroxynonen-1-ol + NADP(+) = a 4-hydroxynonenal + NADPH + H(+). It catalyses the reaction 3-deoxyfructose + NADP(+) = 3-deoxyglucosone + NADPH + H(+). The catalysed reaction is L-gulonate + NADP(+) = aldehydo-D-glucuronate + NADPH + H(+). It carries out the reaction L-gulono-1,4-lactone + NADP(+) = D-glucurono-3,6-lactone + NADPH + H(+). The enzyme catalyses pyridine 3-methanol + NADP(+) = pyridine-3-carbaldehyde + NADPH + H(+). It catalyses the reaction S-nitroso-CoA + NADPH + H(+) = sulfinamide-CoA + NADP(+). The catalysed reaction is S-nitrosoglutathione + NADPH + H(+) = S-(hydroxysulfenamide)glutathione + NADP(+). Its function is as follows. Catalyzes the NADPH-dependent reduction of a wide variety of carbonyl-containing compounds to their corresponding alcohols. Displays enzymatic activity towards endogenous metabolites such as aromatic and aliphatic aldehydes, ketones, monosaccharides and bile acids, with a preference for negatively charged substrates, such as glucuronate and succinic semialdehyde. Functions as a detoxifiying enzyme by reducing a range of toxic aldehydes. Reduces methylglyoxal and 3-deoxyglucosone, which are present at elevated levels under hyperglycemic conditions and are cytotoxic. Involved also in the detoxification of lipid-derived aldehydes like acrolein. Plays a role in the activation of procarcinogens, such as polycyclic aromatic hydrocarbon trans-dihydrodiols, and in the metabolism of various xenobiotics and drugs, including the anthracyclines doxorubicin (DOX) and daunorubicin (DAUN). Also acts as an inhibitor of protein S-nitrosylation by mediating degradation of S-nitroso-coenzyme A (S-nitroso-CoA), a cofactor required to S-nitrosylate proteins. S-nitroso-CoA reductase activity is involved in reprogramming intermediary metabolism in renal proximal tubules, notably by inhibiting protein S-nitrosylation of isoform 2 of PKM (PKM2). Also acts as a S-nitroso-glutathione reductase by catalyzing the NADPH-dependent reduction of S-nitrosoglutathione. Displays no reductase activity towards retinoids. The protein is Aldo-keto reductase family 1 member A1 (AKR1A1) of Homo sapiens (Human).